A 133-amino-acid polypeptide reads, in one-letter code: Ribosome-binding factor A (133 aa).

This sequence belongs to the RbfA family. As to quaternary structure, monomer. Binds 30S ribosomal subunits, but not 50S ribosomal subunits or 70S ribosomes.

It localises to the cytoplasm. In terms of biological role, one of several proteins that assist in the late maturation steps of the functional core of the 30S ribosomal subunit. Associates with free 30S ribosomal subunits (but not with 30S subunits that are part of 70S ribosomes or polysomes). Required for efficient processing of 16S rRNA. May interact with the 5'-terminal helix region of 16S rRNA. This chain is Ribosome-binding factor A, found in Bordetella parapertussis (strain 12822 / ATCC BAA-587 / NCTC 13253).